Reading from the N-terminus, the 452-residue chain is ADP-dependent glucose/glucosamine kinase (452 aa).

The ADPK domain maps to 1–452 (MSWDEMYRDA…AFVSEFSLSS (452 aa)). Residues aspartate 33, glutamate 87, 111-112 (GQ), and histidine 174 contribute to the D-glucose site. A Mg(2+)-binding site is contributed by glutamate 264. Asparagine 290 lines the ADP pocket. Glutamate 293 lines the Mg(2+) pocket. Residues 339–340 (HT), valine 426, and glycine 436 contribute to the ADP site. Aspartate 437 provides a ligand contact to D-glucose. Residue aspartate 437 coordinates Mg(2+). Aspartate 437 serves as the catalytic Proton acceptor.

This sequence belongs to the ADP-dependent glucokinase family. Mg(2+) serves as cofactor.

The protein localises to the cytoplasm. It carries out the reaction D-glucose + ADP = D-glucose 6-phosphate + AMP + H(+). It catalyses the reaction D-glucosamine + ADP = D-glucosamine 6-phosphate + AMP + H(+). It participates in carbohydrate degradation; glycolysis. Functionally, catalyzes the ADP-dependent phosphorylation of D-glucose to D-glucose 6-phosphate and glucosamine to glucosamine 6-phosphate. The polypeptide is ADP-dependent glucose/glucosamine kinase (Pyrococcus abyssi (strain GE5 / Orsay)).